Consider the following 103-residue polypeptide: Cytotoxin-like protein TA-BMBGT3 (103 aa).

The signal sequence occupies residues 1–21; that stretch reads MKTLLLTLVVVTIICLDLGYT. 5 disulfide bridges follow: Cys-24-Cys-45, Cys-27-Cys-37, Cys-38-Cys-72, Cys-76-Cys-90, and Cys-91-Cys-96.

This sequence belongs to the three-finger toxin family. Ancestral subfamily. Orphan group XVII sub-subfamily. As to expression, expressed by the venom gland.

It is found in the secreted. This Bungarus multicinctus (Many-banded krait) protein is Cytotoxin-like protein TA-BMBGT3.